The chain runs to 156 residues: 6,7-dimethyl-8-ribityllumazine synthase (156 aa).

Residues Phe-23, Ala-57 to Glu-59, and Ala-81 to Ile-83 contribute to the 5-amino-6-(D-ribitylamino)uracil site. Ser-86–Thr-87 is a binding site for (2S)-2-hydroxy-3-oxobutyl phosphate. The Proton donor role is filled by His-89. Phe-114 is a binding site for 5-amino-6-(D-ribitylamino)uracil. Arg-128 lines the (2S)-2-hydroxy-3-oxobutyl phosphate pocket.

It belongs to the DMRL synthase family.

It carries out the reaction (2S)-2-hydroxy-3-oxobutyl phosphate + 5-amino-6-(D-ribitylamino)uracil = 6,7-dimethyl-8-(1-D-ribityl)lumazine + phosphate + 2 H2O + H(+). Its pathway is cofactor biosynthesis; riboflavin biosynthesis; riboflavin from 2-hydroxy-3-oxobutyl phosphate and 5-amino-6-(D-ribitylamino)uracil: step 1/2. Catalyzes the formation of 6,7-dimethyl-8-ribityllumazine by condensation of 5-amino-6-(D-ribitylamino)uracil with 3,4-dihydroxy-2-butanone 4-phosphate. This is the penultimate step in the biosynthesis of riboflavin. The sequence is that of 6,7-dimethyl-8-ribityllumazine synthase from Campylobacter curvus (strain 525.92).